The chain runs to 338 residues: Ketol-acid reductoisomerase (NADP(+)) (338 aa).

In terms of domain architecture, KARI N-terminal Rossmann spans 2-182 (TKMYYEKDTD…GGARAGVLET (181 aa)). NADP(+) is bound by residues 25-28 (YGSQ), Ser-51, Ser-53, and 83-86 (DELQ). His-108 is an active-site residue. Gly-134 serves as a coordination point for NADP(+). Positions 183–330 (TFRTETETDL…SEIRKLYCWN (148 aa)) constitute a KARI C-terminal knotted domain. Mg(2+) is bound by residues Asp-191, Glu-195, Glu-227, and Glu-231. Ser-252 is a binding site for substrate.

It belongs to the ketol-acid reductoisomerase family. Mg(2+) serves as cofactor.

The catalysed reaction is (2R)-2,3-dihydroxy-3-methylbutanoate + NADP(+) = (2S)-2-acetolactate + NADPH + H(+). It catalyses the reaction (2R,3R)-2,3-dihydroxy-3-methylpentanoate + NADP(+) = (S)-2-ethyl-2-hydroxy-3-oxobutanoate + NADPH + H(+). It participates in amino-acid biosynthesis; L-isoleucine biosynthesis; L-isoleucine from 2-oxobutanoate: step 2/4. The protein operates within amino-acid biosynthesis; L-valine biosynthesis; L-valine from pyruvate: step 2/4. Functionally, involved in the biosynthesis of branched-chain amino acids (BCAA). Catalyzes an alkyl-migration followed by a ketol-acid reduction of (S)-2-acetolactate (S2AL) to yield (R)-2,3-dihydroxy-isovalerate. In the isomerase reaction, S2AL is rearranged via a Mg-dependent methyl migration to produce 3-hydroxy-3-methyl-2-ketobutyrate (HMKB). In the reductase reaction, this 2-ketoacid undergoes a metal-dependent reduction by NADPH to yield (R)-2,3-dihydroxy-isovalerate. The chain is Ketol-acid reductoisomerase (NADP(+)) from Clostridium botulinum (strain Alaska E43 / Type E3).